Here is a 294-residue protein sequence, read N- to C-terminus: ATP synthase gamma chain (294 aa).

The protein belongs to the ATPase gamma chain family. As to quaternary structure, F-type ATPases have 2 components, CF(1) - the catalytic core - and CF(0) - the membrane proton channel. CF(1) has five subunits: alpha(3), beta(3), gamma(1), delta(1), epsilon(1). CF(0) has three main subunits: a, b and c.

It localises to the cell inner membrane. Its function is as follows. Produces ATP from ADP in the presence of a proton gradient across the membrane. The gamma chain is believed to be important in regulating ATPase activity and the flow of protons through the CF(0) complex. This chain is ATP synthase gamma chain, found in Caulobacter sp. (strain K31).